Reading from the N-terminus, the 276-residue chain is Secretagogin (276 aa).

EF-hand domains follow at residues 12–47 (LDAA…LLAK), 58–93 (NVQK…EDEN), 105–140 (DNSV…LFLH), 149–184 (ELEE…QENF), 197–232 (ERKR…MMEL), and 240–276 (VDLD…KINP). Ca(2+) contacts are provided by D25, Y31, E36, S73, E75, R77, E82, D118, D120, S122, E129, D162, N164, D166, R168, D173, D210, S212, T214, E221, D254, N256, D258, K260, and E265.

The protein localises to the cytoplasm. It localises to the secreted. The protein resides in the cytoplasmic vesicle. Its subcellular location is the secretory vesicle membrane. The sequence is that of Secretagogin (Scgn) from Mus musculus (Mouse).